A 201-amino-acid polypeptide reads, in one-letter code: MIAYIKGTLNSLGDESLIVDVGGIGYEIVCPNPFVFQDLLNQQIHIQTYHHVREDAQILFGFQNRDEKYLFTKLISVSGIGPKGALAILAGVDISGFIAAVENEDDKFLTSFPGVGKKTARQIILDLKGKLTSVFSITDEQQKSSVSNVNNNEVYSEAMEALKALGYTDKEVKQVLPHLKKDNDALSVDEAIRKALALLAK.

Positions 1–63 (MIAYIKGTLN…EDAQILFGFQ (63 aa)) are domain I. Residues 64 to 142 (NRDEKYLFTK…SVFSITDEQQ (79 aa)) are domain II. The segment at 143 to 149 (KSSVSNV) is flexible linker. The domain III stretch occupies residues 150-201 (NNNEVYSEAMEALKALGYTDKEVKQVLPHLKKDNDALSVDEAIRKALALLAK).

The protein belongs to the RuvA family. As to quaternary structure, homotetramer. Forms an RuvA(8)-RuvB(12)-Holliday junction (HJ) complex. HJ DNA is sandwiched between 2 RuvA tetramers; dsDNA enters through RuvA and exits via RuvB. An RuvB hexamer assembles on each DNA strand where it exits the tetramer. Each RuvB hexamer is contacted by two RuvA subunits (via domain III) on 2 adjacent RuvB subunits; this complex drives branch migration. In the full resolvosome a probable DNA-RuvA(4)-RuvB(12)-RuvC(2) complex forms which resolves the HJ.

It is found in the cytoplasm. Its function is as follows. The RuvA-RuvB-RuvC complex processes Holliday junction (HJ) DNA during genetic recombination and DNA repair, while the RuvA-RuvB complex plays an important role in the rescue of blocked DNA replication forks via replication fork reversal (RFR). RuvA specifically binds to HJ cruciform DNA, conferring on it an open structure. The RuvB hexamer acts as an ATP-dependent pump, pulling dsDNA into and through the RuvAB complex. HJ branch migration allows RuvC to scan DNA until it finds its consensus sequence, where it cleaves and resolves the cruciform DNA. This Oceanobacillus iheyensis (strain DSM 14371 / CIP 107618 / JCM 11309 / KCTC 3954 / HTE831) protein is Holliday junction branch migration complex subunit RuvA.